The sequence spans 120 residues: Large ribosomal subunit protein uL18 (120 aa).

It belongs to the universal ribosomal protein uL18 family. As to quaternary structure, part of the 50S ribosomal subunit; part of the 5S rRNA/L5/L18/L25 subcomplex. Contacts the 5S and 23S rRNAs.

This is one of the proteins that bind and probably mediate the attachment of the 5S RNA into the large ribosomal subunit, where it forms part of the central protuberance. This Bartonella bacilliformis (strain ATCC 35685 / KC583 / Herrer 020/F12,63) protein is Large ribosomal subunit protein uL18.